Reading from the N-terminus, the 85-residue chain is MSEKTVRTLTGKVVSDKMDKSIVVLIERRVQHPLYGKSIRRSTKLHAHDENNVAKIGDVVTIKESRPISKTKAWTLVEVVEAAAE.

Belongs to the universal ribosomal protein uS17 family. As to quaternary structure, part of the 30S ribosomal subunit.

Its function is as follows. One of the primary rRNA binding proteins, it binds specifically to the 5'-end of 16S ribosomal RNA. This Acinetobacter baumannii (strain AB307-0294) protein is Small ribosomal subunit protein uS17.